The primary structure comprises 474 residues: A-type ATP synthase subunit B (474 aa).

Belongs to the ATPase alpha/beta chains family. Has multiple subunits with at least A(3), B(3), C, D, E, F, H, I and proteolipid K(x).

The protein localises to the cell membrane. Functionally, component of the A-type ATP synthase that produces ATP from ADP in the presence of a proton gradient across the membrane. The B chain is a regulatory subunit. The protein is A-type ATP synthase subunit B of Halorubrum lacusprofundi (strain ATCC 49239 / DSM 5036 / JCM 8891 / ACAM 34).